A 227-amino-acid chain; its full sequence is 2-C-methyl-D-erythritol 4-phosphate cytidylyltransferase (227 aa).

Belongs to the IspD/TarI cytidylyltransferase family. IspD subfamily.

It catalyses the reaction 2-C-methyl-D-erythritol 4-phosphate + CTP + H(+) = 4-CDP-2-C-methyl-D-erythritol + diphosphate. It functions in the pathway isoprenoid biosynthesis; isopentenyl diphosphate biosynthesis via DXP pathway; isopentenyl diphosphate from 1-deoxy-D-xylulose 5-phosphate: step 2/6. Catalyzes the formation of 4-diphosphocytidyl-2-C-methyl-D-erythritol from CTP and 2-C-methyl-D-erythritol 4-phosphate (MEP). This is 2-C-methyl-D-erythritol 4-phosphate cytidylyltransferase from Tolumonas auensis (strain DSM 9187 / NBRC 110442 / TA 4).